The chain runs to 377 residues: D-alanine--D-alanine ligase (377 aa).

The region spanning 140 to 349 (KELLTVNNIR…NVELVDKLID (210 aa)) is the ATP-grasp domain. ATP is bound at residue 170-225 (VKDLGDVVFVKAANQGSSVGVSRAKTADEFEAALTDSFQYDYKVLIEAAVKGPREL). Residues Asp303, Glu316, and Asn318 each coordinate Mg(2+).

This sequence belongs to the D-alanine--D-alanine ligase family. Mg(2+) is required as a cofactor. It depends on Mn(2+) as a cofactor.

The protein localises to the cytoplasm. The catalysed reaction is 2 D-alanine + ATP = D-alanyl-D-alanine + ADP + phosphate + H(+). Its pathway is cell wall biogenesis; peptidoglycan biosynthesis. In terms of biological role, cell wall formation. The protein is D-alanine--D-alanine ligase of Leuconostoc citreum (strain KM20).